A 232-amino-acid polypeptide reads, in one-letter code: N-acetyltransferase 8B (232 aa).

Over 1–62 (MPRFEAQKSS…FLLLLGVPLA (62 aa)) the chain is Cytoplasmic. The helical; Signal-anchor for type II membrane protein transmembrane segment at 63-83 (LVLVSGSWILAVICIFFLLLL) threads the bilayer. One can recognise an N-acetyltransferase domain in the interval 79–224 (FLLLLLRLLA…WRLVDICFIQ (146 aa)). Topologically, residues 84–232 (LRLLARQPWK…IQLNYSFPSA (149 aa)) are lumenal. An N6-acetyllysine modification is found at Lys-109.

The protein belongs to the NAT8 family. Acetylation on Lys-109 modulates enzymatic activity. As to expression, expressed in brain (at protein level).

Its subcellular location is the endoplasmic reticulum-Golgi intermediate compartment membrane. It localises to the endoplasmic reticulum membrane. The enzyme catalyses L-lysyl-[protein] + acetyl-CoA = N(6)-acetyl-L-lysyl-[protein] + CoA + H(+). Endoplasmic reticulum (ER)-membrane-bound lysine N-acetyltransferase catalyzing the N6-acetylation of lysine residues in the lumen of the ER in various proteins, including PROM1 and BACE1, using acetyl-CoA as acetyl donor. Thereby, may regulate apoptosis through the acetylation and the regulation of the expression of PROM1. Acetylates and stabilizes BACE1 immature protein, leading to increased steady-state levels in neurons. By acting on BACE1 expression, may regulate amyloid beta-peptide formation. N(6)-lysine acetylation in ER maintains protein homeostasis and regulates reticulophagy. This chain is N-acetyltransferase 8B, found in Mus musculus (Mouse).